A 362-amino-acid chain; its full sequence is 3-ketodihydrosphingosine reductase gsl-3 (362 aa).

Residue Leu-55 coordinates NADP(+). 4 residues coordinate NADPH: Gly-58, Ser-60, Gly-62, and Arg-83. Positions 58 to 62 (GASEG) match the GXSXG motif. Asn-84 contacts NADP(+). NADPH is bound by residues Arg-87 and Asp-113. Positions 113, 176, 216, 220, 252, and 254 each coordinate NADP(+). Residue Tyr-216 is the Proton acceptor of the active site. Lys-220 (lowers pKa of active site Tyr) is an active-site residue. The chain crosses the membrane as a helical span at residues 318–338 (NNWVLDTLMGWLIPIIYFFVL).

This sequence belongs to the short-chain dehydrogenases/reductases (SDR) family.

It is found in the endoplasmic reticulum membrane. The enzyme catalyses sphinganine + NADP(+) = 3-oxosphinganine + NADPH + H(+). Its pathway is lipid metabolism; sphingolipid metabolism. In terms of biological role, catalyzes the reduction of 3'-oxosphinganine (3-ketodihydrosphingosine/KDS) to sphinganine (dihydrosphingosine/DHS), the second step of de novo sphingolipid biosynthesis. The protein is 3-ketodihydrosphingosine reductase gsl-3 (gsl-3) of Neurospora crassa (strain ATCC 24698 / 74-OR23-1A / CBS 708.71 / DSM 1257 / FGSC 987).